The chain runs to 190 residues: dITP/XTP pyrophosphatase (190 aa).

Residue 7–12 coordinates substrate; it reads THNPNK. Mg(2+) contacts are provided by Glu-39 and Asp-68. Asp-68 (proton acceptor) is an active-site residue. Substrate is bound by residues Thr-69, 148-151, Lys-171, and 176-177; these read FGYD and HR.

This sequence belongs to the HAM1 NTPase family. As to quaternary structure, homodimer. Mg(2+) is required as a cofactor.

It carries out the reaction XTP + H2O = XMP + diphosphate + H(+). It catalyses the reaction dITP + H2O = dIMP + diphosphate + H(+). The enzyme catalyses ITP + H2O = IMP + diphosphate + H(+). Functionally, pyrophosphatase that catalyzes the hydrolysis of nucleoside triphosphates to their monophosphate derivatives, with a high preference for the non-canonical purine nucleotides XTP (xanthosine triphosphate), dITP (deoxyinosine triphosphate) and ITP. Seems to function as a house-cleaning enzyme that removes non-canonical purine nucleotides from the nucleotide pool, thus preventing their incorporation into DNA/RNA and avoiding chromosomal lesions. The protein is dITP/XTP pyrophosphatase of Christiangramia forsetii (strain DSM 17595 / CGMCC 1.15422 / KT0803) (Gramella forsetii).